A 929-amino-acid chain; its full sequence is Lon protease homolog 2, peroxisomal (929 aa).

The Lon N-terminal domain maps to 11 to 257; sequence LPLVPLPKGS…RVVEILTRQL (247 aa). The tract at residues 302-325 is disordered; that stretch reads GLTPPGLSAGRNNDNDDKESNEVD. 484 to 491 contacts ATP; sequence GPPGVGKT. A Lon proteolytic domain is found at 727-914; sequence HGRPGVVTGL…WEAIRQVWPD (188 aa). Residues S820 and K863 contribute to the active site. The Microbody targeting signal signature appears at 927 to 929; it reads SRL.

Belongs to the peptidase S16 family.

The protein resides in the peroxisome matrix. It catalyses the reaction Hydrolysis of proteins in presence of ATP.. In terms of biological role, ATP-dependent serine protease that mediates the selective degradation of misfolded and unassembled polypeptides in the peroxisomal matrix. Necessary for type 2 peroxisome targeting signal (PTS2)-containing protein processing and facilitates peroxisome matrix protein import. The protein is Lon protease homolog 2, peroxisomal of Aspergillus niger (strain ATCC MYA-4892 / CBS 513.88 / FGSC A1513).